The sequence spans 231 residues: CD302 antigen (231 aa).

The N-terminal stretch at 1-21 (MSAAVVATLPTLLLLLGLAAA) is a signal peptide. The Extracellular portion of the chain corresponds to 22–169 (DCPSSSWVQF…YEKKYLPDHH (148 aa)). A C-type lectin domain is found at 31–153 (FQSNCYIFLQ…CEVSSVEGAL (123 aa)). The N-linked (GlcNAc...) asparagine glycan is linked to N110. C129 and C144 form a disulfide bridge. A helical transmembrane segment spans residues 170-190 (ILITALVIASTTILTITGAVV). At 191–231 (WFLYKRNLTSGLTNTAYTTAPQLPYNDDCILVDAEENEYVA) the chain is on the cytoplasmic side.

It localises to the membrane. The protein resides in the cell projection. It is found in the filopodium. Its subcellular location is the cytoplasm. The protein localises to the cell cortex. It localises to the microvillus. Functionally, potential multifunctional C-type lectin receptor that may play roles in endocytosis and phagocytosis as well as in cell adhesion and migration. The chain is CD302 antigen from Trichosurus vulpecula (Brush-tailed possum).